A 285-amino-acid polypeptide reads, in one-letter code: Tropomyosin-2 (285 aa).

The stretch at 1-277 (MDAIKKKMQA…KDIGDDLDTA (277 aa)) forms a coiled coil. Positions 103-133 (EERLATATAKLSEASQAADESERARKVLENR) are disordered. A compositionally biased stretch (basic and acidic residues) spans 122–133 (ESERARKVLENR).

It belongs to the tropomyosin family. Homodimer.

In terms of biological role, tropomyosin, in association with the troponin complex, plays a central role in the calcium dependent regulation of muscle contraction. The polypeptide is Tropomyosin-2 (Bombyx mori (Silk moth)).